Reading from the N-terminus, the 600-residue chain is uncharacterized protein (600 aa).

2 consecutive 4Fe-4S ferredoxin-type domains span residues 14-44 (RLAI…MGEK) and 53-82 (GKPV…IIGL). ABC transporter domains follow at residues 77–318 (ISII…YLYG) and 348–563 (LLSY…LKEM). ATP is bound by residues 117 to 124 (GQNGIGKS) and 380 to 387 (GPNGIGKT). Residues 569 to 594 (RDPETGRPRANKEGSQRDIMQKEKGE) show a composition bias toward basic and acidic residues. A disordered region spans residues 569–600 (RDPETGRPRANKEGSQRDIMQKEKGEYYYVDE).

The protein belongs to the ABC transporter superfamily.

This is an uncharacterized protein from Methanocaldococcus jannaschii (strain ATCC 43067 / DSM 2661 / JAL-1 / JCM 10045 / NBRC 100440) (Methanococcus jannaschii).